The following is a 201-amino-acid chain: Acyl-homoserine-lactone synthase (201 aa).

The protein belongs to the autoinducer synthase family.

The enzyme catalyses a fatty acyl-[ACP] + S-adenosyl-L-methionine = an N-acyl-L-homoserine lactone + S-methyl-5'-thioadenosine + holo-[ACP] + H(+). Required for the synthesis of PAI consisting of 3-oxo-N-(tetrahydro-2-oxo-3-furanyl)-dodecanamide also known as N-(3-oxododecanoyl)homoserine lactone, an autoinducer molecule which binds to LasR and thus acts in elastase biosynthesis regulation. The sequence is that of Acyl-homoserine-lactone synthase (lasI) from Pseudomonas aeruginosa (strain ATCC 15692 / DSM 22644 / CIP 104116 / JCM 14847 / LMG 12228 / 1C / PRS 101 / PAO1).